A 523-amino-acid polypeptide reads, in one-letter code: NAD(P)H-quinone oxidoreductase subunit 2 (523 aa).

14 helical membrane-spanning segments follow: residues 29-49, 57-77, 94-114, 123-143, 147-167, 182-202, 221-243, 255-275, 291-311, 317-337, 345-365, 389-409, 424-444, and 477-497; these read AIAPEGAVLVAMLATLLVDLA, WVPPICYAGLGTALVLLAQQW, LAIAFRAVVALSTLLSLLISW, PIGEYAAILLAATLGAMLLCG, LVSVFVSLETLSVASYLLAGY, LLVGSAAAAVFLYGASLLYGL, PLAALSLVFVLATVAFKIAAVPF, PTPVVAFLSVGSKAAGFALAL, LLFTVLAVLSMTLGNVVALAQ, MLAYSSIGQAGFVMIGLVCGT, VLYMAAYLFMNLGAFACIILF, LGLSLCLLSLGGIPPMLGFFG, LLVVVGLVTSVVSIYYYISVI, and IALVGCVVVTAVGGILSNPLF.

This sequence belongs to the complex I subunit 2 family. As to quaternary structure, NDH-1 can be composed of about 15 different subunits; different subcomplexes with different compositions have been identified which probably have different functions.

It localises to the cellular thylakoid membrane. It catalyses the reaction a plastoquinone + NADH + (n+1) H(+)(in) = a plastoquinol + NAD(+) + n H(+)(out). The enzyme catalyses a plastoquinone + NADPH + (n+1) H(+)(in) = a plastoquinol + NADP(+) + n H(+)(out). Functionally, NDH-1 shuttles electrons from an unknown electron donor, via FMN and iron-sulfur (Fe-S) centers, to quinones in the respiratory and/or the photosynthetic chain. The immediate electron acceptor for the enzyme in this species is believed to be plastoquinone. Couples the redox reaction to proton translocation, and thus conserves the redox energy in a proton gradient. Cyanobacterial NDH-1 also plays a role in inorganic carbon-concentration. This is NAD(P)H-quinone oxidoreductase subunit 2 from Prochlorococcus marinus (strain MIT 9303).